The sequence spans 250 residues: Triosephosphate isomerase (250 aa).

Position 9–11 (9–11 (NWK)) interacts with substrate. The active-site Electrophile is the histidine 95. The Proton acceptor role is filled by glutamate 167. Substrate contacts are provided by residues glycine 173, serine 213, and 234-235 (GG).

The protein belongs to the triosephosphate isomerase family. Homodimer.

It localises to the cytoplasm. The enzyme catalyses D-glyceraldehyde 3-phosphate = dihydroxyacetone phosphate. Its pathway is carbohydrate biosynthesis; gluconeogenesis. It participates in carbohydrate degradation; glycolysis; D-glyceraldehyde 3-phosphate from glycerone phosphate: step 1/1. Functionally, involved in the gluconeogenesis. Catalyzes stereospecifically the conversion of dihydroxyacetone phosphate (DHAP) to D-glyceraldehyde-3-phosphate (G3P). The protein is Triosephosphate isomerase of Herpetosiphon aurantiacus (strain ATCC 23779 / DSM 785 / 114-95).